We begin with the raw amino-acid sequence, 172 residues long: Histone H2A.Z-specific chaperone CHZ1 (172 aa).

Composition is skewed to basic and acidic residues over residues 1-10 (MAEEIKDKQE) and 54-68 (NYDDLDEKIAQEDKA). The interval 1–172 (MAEEIKDKQE…PAPASPTEPK (172 aa)) is disordered. Composition is skewed to acidic residues over residues 78-88 (EDSESEVDDEK) and 96-105 (EDEEEDDLSE). Over residues 121–139 (KIIDYKKTAEKLEKNGEVG) the composition is skewed to basic and acidic residues. Positions 140–155 (KDDDDDEDDEENDEEF) are enriched in acidic residues. Over residues 160–172 (APAPAPASPTEPK) the composition is skewed to pro residues.

This sequence belongs to the CHZ1 family. Forms a heterotrimer with H2A.Z-H2B, stabilizing the association of the histone dimer. Also, with a lower affinity, forms a heterotrimer with H2A-H2B.

It is found in the nucleus. Functionally, forms a chaperone-bound H2A.Z-H2B complex that acts as a source for SWR1 complex-dependent H2A to H2A.Z histone replacement in chromatin. The polypeptide is Histone H2A.Z-specific chaperone CHZ1 (CHZ1) (Kluyveromyces lactis (strain ATCC 8585 / CBS 2359 / DSM 70799 / NBRC 1267 / NRRL Y-1140 / WM37) (Yeast)).